The following is a 400-amino-acid chain: Phosphoglycerate kinase (400 aa).

Residues 22–24 (DFN), Arg-38, 61–64 (HLGR), Arg-119, and Arg-152 contribute to the substrate site. Residues Lys-205, Gly-296, Glu-327, and 353–356 (GGDT) each bind ATP.

This sequence belongs to the phosphoglycerate kinase family. As to quaternary structure, monomer.

The protein resides in the cytoplasm. It carries out the reaction (2R)-3-phosphoglycerate + ATP = (2R)-3-phospho-glyceroyl phosphate + ADP. The protein operates within carbohydrate degradation; glycolysis; pyruvate from D-glyceraldehyde 3-phosphate: step 2/5. This is Phosphoglycerate kinase from Campylobacter lari (strain RM2100 / D67 / ATCC BAA-1060).